The chain runs to 272 residues: Tryptophan synthase alpha chain (272 aa).

Residues Glu-49 and Asp-60 each act as proton acceptor in the active site.

Belongs to the TrpA family. As to quaternary structure, tetramer of two alpha and two beta chains.

The catalysed reaction is (1S,2R)-1-C-(indol-3-yl)glycerol 3-phosphate + L-serine = D-glyceraldehyde 3-phosphate + L-tryptophan + H2O. The protein operates within amino-acid biosynthesis; L-tryptophan biosynthesis; L-tryptophan from chorismate: step 5/5. Functionally, the alpha subunit is responsible for the aldol cleavage of indoleglycerol phosphate to indole and glyceraldehyde 3-phosphate. The protein is Tryptophan synthase alpha chain of Psychrobacter cryohalolentis (strain ATCC BAA-1226 / DSM 17306 / VKM B-2378 / K5).